Reading from the N-terminus, the 428-residue chain is Glutamine synthetase leaf isozyme, chloroplastic (428 aa).

Residues 1–49 (MAQILAPSIQCQTRITKTSPLATPISSKMWSSLVMKQNKKVARSAKFRV) constitute a chloroplast transit peptide. The 81-residue stretch at 75-155 (IIAEYIWIGG…VICDAYTPQG (81 aa)) folds into the GS beta-grasp domain. Positions 159–428 (PTNKRHKAAE…LAAQKIALKV (270 aa)) constitute a GS catalytic domain.

This sequence belongs to the glutamine synthetase family. In terms of assembly, homooctamer.

The protein localises to the plastid. It localises to the chloroplast. The enzyme catalyses L-glutamate + NH4(+) + ATP = L-glutamine + ADP + phosphate + H(+). In terms of biological role, the light-modulated chloroplast enzyme, encoded by a nuclear gene and expressed primarily in leaves, is responsible for the reassimilation of the ammonia generated by photorespiration. The chain is Glutamine synthetase leaf isozyme, chloroplastic (GS2) from Medicago sativa (Alfalfa).